The sequence spans 290 residues: ATP synthase subunit a (290 aa).

A run of 6 helical transmembrane segments spans residues 44 to 64 (AFHV…ILLF), 104 to 124 (VIAP…AIDL), 161 to 181 (LSVF…GGFI), 194 to 214 (ILVQ…TLVA), 233 to 253 (VFIL…GMGV), and 260 to 280 (AVFH…LTIV).

It belongs to the ATPase A chain family. As to quaternary structure, F-type ATPases have 2 components, CF(1) - the catalytic core - and CF(0) - the membrane proton channel. CF(1) has five subunits: alpha(3), beta(3), gamma(1), delta(1), epsilon(1). CF(0) has three main subunits: a(1), b(2) and c(9-12). The alpha and beta chains form an alternating ring which encloses part of the gamma chain. CF(1) is attached to CF(0) by a central stalk formed by the gamma and epsilon chains, while a peripheral stalk is formed by the delta and b chains.

It localises to the cell inner membrane. In terms of biological role, key component of the proton channel; it plays a direct role in the translocation of protons across the membrane. This Pseudomonas fluorescens (strain ATCC BAA-477 / NRRL B-23932 / Pf-5) protein is ATP synthase subunit a.